A 375-amino-acid polypeptide reads, in one-letter code: 23S rRNA (uracil(747)-C(5))-methyltransferase RlmC (375 aa).

Residues C3, C11, C14, and C87 each coordinate [4Fe-4S] cluster. Positions 212, 241, 262, and 307 each coordinate S-adenosyl-L-methionine. C334 functions as the Nucleophile in the catalytic mechanism.

It belongs to the class I-like SAM-binding methyltransferase superfamily. RNA M5U methyltransferase family. RlmC subfamily.

The catalysed reaction is uridine(747) in 23S rRNA + S-adenosyl-L-methionine = 5-methyluridine(747) in 23S rRNA + S-adenosyl-L-homocysteine + H(+). In terms of biological role, catalyzes the formation of 5-methyl-uridine at position 747 (m5U747) in 23S rRNA. The protein is 23S rRNA (uracil(747)-C(5))-methyltransferase RlmC of Salmonella agona (strain SL483).